We begin with the raw amino-acid sequence, 203 residues long: Thymidylate kinase (203 aa).

14-21 (GMDGIGKS) contacts ATP.

Belongs to the thymidylate kinase family.

The enzyme catalyses dTMP + ATP = dTDP + ADP. Functionally, phosphorylation of dTMP to form dTDP in both de novo and salvage pathways of dTTP synthesis. This chain is Thymidylate kinase, found in Rickettsia typhi (strain ATCC VR-144 / Wilmington).